The sequence spans 341 residues: Protein phosphatase methylesterase 1 (341 aa).

Positions 1–24 are disordered; the sequence is MAFRKEELSQTLYENESEQSSETK. Positions 9-20 are enriched in polar residues; sequence SQTLYENESEQS. Residues S153, D178, and H304 contribute to the active site.

The protein belongs to the AB hydrolase superfamily.

The catalysed reaction is [phosphatase 2A protein]-C-terminal L-leucine methyl ester + H2O = [phosphatase 2A protein]-C-terminal L-leucine + methanol + H(+). Functionally, demethylates proteins that have been reversibly carboxymethylated. Demethylates the phosphatase PP2A catalytic subunit. The sequence is that of Protein phosphatase methylesterase 1 (ppe1) from Schizosaccharomyces pombe (strain 972 / ATCC 24843) (Fission yeast).